Consider the following 166-residue polypeptide: Probable chemoreceptor glutamine deamidase CheD (166 aa).

This sequence belongs to the CheD family.

It carries out the reaction L-glutaminyl-[protein] + H2O = L-glutamyl-[protein] + NH4(+). Probably deamidates glutamine residues to glutamate on methyl-accepting chemotaxis receptors (MCPs), playing an important role in chemotaxis. The protein is Probable chemoreceptor glutamine deamidase CheD of Desulforamulus reducens (strain ATCC BAA-1160 / DSM 100696 / MI-1) (Desulfotomaculum reducens).